Consider the following 180-residue polypeptide: Required for excision 1-B domain-containing protein (180 aa).

The segment at 1-23 (MITAEAASESTVPAVPGDTAATG) is disordered.

This chain is Required for excision 1-B domain-containing protein, found in Bos taurus (Bovine).